The primary structure comprises 429 residues: Adenylosuccinate synthetase (429 aa).

GTP-binding positions include 12–18 and 40–42; these read GDEGKGK and GHT. Asp-13 functions as the Proton acceptor in the catalytic mechanism. Mg(2+) contacts are provided by Asp-13 and Gly-40. Residues 13 to 16, 38 to 41, Thr-127, Arg-141, Gln-222, Thr-237, and Arg-301 contribute to the IMP site; these read DEGK and NAGH. Residue His-41 is the Proton donor of the active site. Residue 297–303 coordinates substrate; that stretch reads ATTGRPR. GTP is bound by residues Arg-303, 329 to 331, and 411 to 413; these read KLD and SLG.

It belongs to the adenylosuccinate synthetase family. Homodimer. The cofactor is Mg(2+).

The protein resides in the cytoplasm. It catalyses the reaction IMP + L-aspartate + GTP = N(6)-(1,2-dicarboxyethyl)-AMP + GDP + phosphate + 2 H(+). It participates in purine metabolism; AMP biosynthesis via de novo pathway; AMP from IMP: step 1/2. Plays an important role in the de novo pathway of purine nucleotide biosynthesis. Catalyzes the first committed step in the biosynthesis of AMP from IMP. This chain is Adenylosuccinate synthetase, found in Endomicrobium trichonymphae.